The sequence spans 298 residues: 4-hydroxy-tetrahydrodipicolinate synthase (298 aa).

T48 is a binding site for pyruvate. The Proton donor/acceptor role is filled by Y137. K166 functions as the Schiff-base intermediate with substrate in the catalytic mechanism. A pyruvate-binding site is contributed by I207.

It belongs to the DapA family. Homotetramer; dimer of dimers.

The protein resides in the cytoplasm. The enzyme catalyses L-aspartate 4-semialdehyde + pyruvate = (2S,4S)-4-hydroxy-2,3,4,5-tetrahydrodipicolinate + H2O + H(+). It functions in the pathway amino-acid biosynthesis; L-lysine biosynthesis via DAP pathway; (S)-tetrahydrodipicolinate from L-aspartate: step 3/4. Its function is as follows. Catalyzes the condensation of (S)-aspartate-beta-semialdehyde [(S)-ASA] and pyruvate to 4-hydroxy-tetrahydrodipicolinate (HTPA). The sequence is that of 4-hydroxy-tetrahydrodipicolinate synthase from Campylobacter jejuni subsp. doylei (strain ATCC BAA-1458 / RM4099 / 269.97).